Consider the following 179-residue polypeptide: Large ribosomal subunit protein uL6 (179 aa).

The protein belongs to the universal ribosomal protein uL6 family. In terms of assembly, part of the 50S ribosomal subunit.

Its function is as follows. This protein binds to the 23S rRNA, and is important in its secondary structure. It is located near the subunit interface in the base of the L7/L12 stalk, and near the tRNA binding site of the peptidyltransferase center. In Halothermothrix orenii (strain H 168 / OCM 544 / DSM 9562), this protein is Large ribosomal subunit protein uL6.